Consider the following 504-residue polypeptide: MLKTTTVAGLAAVLLTTGLPAEVAQSFAEAVRVQAPAVPSFANVVDAVSPAVVSVRVQARERVSDDESNFTFDFGGRGFEDLPEDHPLRRFFREFAPRENDRADRWRDRRGPRGEGRLRPRAQGSGFFITEDGYLVTNNHVVSDGSAFTVIMNDGTELDAKLVGKDSRTDLAVLKVDDKRKFTYVSFADDEKVRVGDWVVAVGNPFGLGGTVTAGIISARGRDIGSGPYDDYLQVDAAVNRGNSGGPTFNLSGEVVGINTAIFSPSGGNVGIAFAIPASVAKDVVDSLIKDGTVSRGWLGVQIQPVTKDIAESLGLSEANGALVVEPQAGSPGEKAGIKNGDVVTALNGEPVKDPRDLARRVAALRPGSTAEVTLWRSGKSETVNLEIGTLPSDAKEPAPATGEAQPDEGQAGEEALADLGLTVTPSEDGKGVTIASVDPDSDAGDRGLKEGEKIVSVNNQEVKSADDVLKVINNAKKDGRSKALFQIEAQEGSRFVALPITQG.

The first 26 residues, M1–S26, serve as a signal peptide directing secretion. Residues R102 to L118 are compositionally biased toward basic and acidic residues. The interval R102–A122 is disordered. Residues R113–D286 are serine protease. Active-site charge relay system residues include H140, D170, and S244. Substrate-binding positions include G242–S244 and L299–I303. PDZ domains lie at S287–S378 and A401–Q491. Disordered regions lie at residues G389 to Q411 and E428 to R447.

This sequence belongs to the peptidase S1C family.

The protein resides in the periplasm. The enzyme catalyses Acts on substrates that are at least partially unfolded. The cleavage site P1 residue is normally between a pair of hydrophobic residues, such as Val-|-Val.. In terms of biological role, might be efficient in the degradation of transiently denatured and unfolded proteins which accumulate in the periplasm following stress conditions. The sequence is that of Probable periplasmic serine endoprotease DegP-like (degP1) from Rhizobium meliloti (strain 1021) (Ensifer meliloti).